The sequence spans 400 residues: Enoyl-[acyl-carrier-protein] reductase [NADH] (400 aa).

Residues 48-53 (GASTGY), 74-75 (FE), 111-112 (DA), and 139-140 (LA) each bind NAD(+). Residue Y225 coordinates substrate. Y235 functions as the Proton donor in the catalytic mechanism. Residues K244 and 273-275 (VVT) contribute to the NAD(+) site.

It belongs to the TER reductase family. Monomer.

It catalyses the reaction a 2,3-saturated acyl-[ACP] + NAD(+) = a (2E)-enoyl-[ACP] + NADH + H(+). The protein operates within lipid metabolism; fatty acid biosynthesis. Functionally, involved in the final reduction of the elongation cycle of fatty acid synthesis (FAS II). Catalyzes the reduction of a carbon-carbon double bond in an enoyl moiety that is covalently linked to an acyl carrier protein (ACP). The chain is Enoyl-[acyl-carrier-protein] reductase [NADH] from Burkholderia lata (strain ATCC 17760 / DSM 23089 / LMG 22485 / NCIMB 9086 / R18194 / 383).